The following is a 361-amino-acid chain: RLA class I histocompatibility antigen, alpha chain 19-1 (361 aa).

Residues 1-24 (MGSIPPRTLLLLLAGALTLKDTQA) form the signal peptide. The alpha-1 stretch occupies residues 25–114 (GSHSMRYFYT…ALRYYNQSAA (90 aa)). Over 25–308 (GSHSMRYFYT…EPPAQPTALI (284 aa)) the chain is Extracellular. N-linked (GlcNAc...) asparagine glycosylation is present at Asn110. The segment at 115–206 (GSHTFQTMFG…EMGKETLQRA (92 aa)) is alpha-2. Cystine bridges form between Cys125–Cys188 and Cys227–Cys283. Positions 207-298 (DPPKAHVTHH…GLPEPLTLTW (92 aa)) are alpha-3. The Ig-like C1-type domain maps to 209-297 (PKAHVTHHPA…EGLPEPLTLT (89 aa)). The tract at residues 299–308 (EPPAQPTALI) is connecting peptide. A helical transmembrane segment spans residues 309-329 (VGIVAGVLGVLLILGAVVAVV). The Cytoplasmic portion of the chain corresponds to 330–361 (RRKKHSSDGKGGRYTPAAGGHRDQGSDDSLMP). The disordered stretch occupies residues 335-361 (SSDGKGGRYTPAAGGHRDQGSDDSLMP). Phosphoserine occurs at positions 355 and 358.

It belongs to the MHC class I family. As to quaternary structure, heterodimer of an alpha chain and a beta chain (beta-2-microglobulin).

Its subcellular location is the membrane. Involved in the presentation of foreign antigens to the immune system. This is RLA class I histocompatibility antigen, alpha chain 19-1 from Oryctolagus cuniculus (Rabbit).